A 212-amino-acid chain; its full sequence is Fucoxanthin-chlorophyll a-c binding protein E, chloroplastic (212 aa).

Residues 1 to 34 constitute a chloroplast transit peptide; the sequence is MAIACAAAPGLRGAEPFNGAALATSAKSSSAMKM. Helical transmembrane passes span 76 to 96, 117 to 137, and 178 to 198; these read IAML…PGML, IPPL…LFVV, and GRAA…SNQP.

This sequence belongs to the fucoxanthin chlorophyll protein family. As to quaternary structure, the LHC complex of chromophytic algae is composed of fucoxanthin, chlorophyll A and C bound non-covalently by fucoxanthin chlorophyll proteins (FCPs). The ratio of pigments in this LHC is; fucoxanthin: chlorophyll C: chlorophyll A; (0.6-1): (0.1-0.3): (1).

Its subcellular location is the plastid. The protein resides in the chloroplast thylakoid membrane. Functionally, the light-harvesting complex (LHC) functions as a light receptor, it captures and delivers excitation energy to photosystems with which it is closely associated. Energy is transferred from the carotenoid and chlorophyll C (or B) to chlorophyll A and the photosynthetic reaction centers where it is used to synthesize ATP and reducing power. The protein is Fucoxanthin-chlorophyll a-c binding protein E, chloroplastic (FCPE) of Macrocystis pyrifera (Giant kelp).